The sequence spans 1229 residues: MSPAAAAAGAGERRRPIASVRDGRGRGCGGPAGAALLGLSLVGLLLYLVPAAAALAWLAVGTTAAWWGLSREPRGSRPLSSFVQKARHRRTLFASPPAKSTANGNLLEPRTLLEGPDPAELLLMGSYLGKPGPPQPAPAPEGQDLRNRPGRRPPARPAPRSTPPSQPTHRVHHFYPSLPTPLLRPSGRPSPRDRGTLPDRFVITPRRRYPIHQTQYSCPGVLPTVCWNGYHKKAVLSPRNSRMVCSPVTVRIAPPDRRFSRSAIPEQIISSTLSSPSSNAPDPCAKETVLSALKEKKKKRTVEEEDQIFLDGQENKRRRHDSSGSGHSAFEPLVASGVPASFVPKPGSLKRGLNSQSSDDHLNKRSRSSSMSSLTGAYTSGIPSSSRNAITSSYSSTRGISQLWKRNGPSSSPFSSPASSRSQTPERPAKKIREEELCHHSSSSTPLAADKESQGEKAADTTPRKKQNSNSQSTPGSSGQRKRKVQLLPSRRGEQLTLPPPPQLGYSITAEDLDLEKKASLQWFNQALEDKSDAASNSVTETPPTTQPSFTFTLPAAATASPPTSLLAPSTNPLLESLKKMQTPPSLPPCPESAGAATTEALSPPKTPSLLPPLGLSQSGPPGLLPSPSFDSKPPTTLLGLIPAPSMVPATDTKAPPTLQAETATKPQATSAPSPAPKQSFLFGTQNTSPSSPAAPAASSASPMFKPIFTAPPKSEKEGLTPPGPSVSATAPSSSSLPTTTSTTAPTFQPVFSSMGPPASVPLPAPFFKQTTTPATAPTTTAPLFTGLASATSAVAPITSASPSTDSASKPAFGFGINSVSSSSVSTTTSTATAASQPFLFGAPQASAASFTPAMGSIFQFGKPPALPTTTTVTTFSQSLPTAVPTATSSSAADFSGFGSTLATSAPATSSQPTLTFSNTSTPTFNIPFGSSAKSPLPSYPGANPQPAFGAAEGQPPGAAKPALTPSFGSSFTFGNSAAPAPATAPTPAPASTIKIVPAHVPTPIQPTFGGATHSAFGLKATASAFGAPASSQPAFGGSTAVFSFGAATSSGFGATTQTASSGSSSSVFGSTTPSPFTFGGSAAPAGSGSFGINVATPGSSATTGAFSFGAGQSGSTATSTPFTGGLGQNALGTTGQSTPFAFNVGSTTESKPVFGGTATPTFGQNTPAPGVGTSGSSLSFGASSAPAQGFVGVGPFGSAAPSFSIGAGSKTPGARQRLQARRQHTRKK.

Low complexity predominate over residues 1–10 (MSPAAAAAGA). Residues 1–24 (MSPAAAAAGAGERRRPIASVRDGR) are disordered. The cisternal side stretch occupies residues 1–40 (MSPAAAAAGAGERRRPIASVRDGRGRGCGGPAGAALLGLS). Residues 1 to 398 (MSPAAAAAGA…AITSSYSSTR (398 aa)) form a required for targeting to the nucleus and nuclear pore complex region. Over residues 11-24 (GERRRPIASVRDGR) the composition is skewed to basic and acidic residues. The chain crosses the membrane as a helical span at residues 41-61 (LVGLLLYLVPAAAALAWLAVG). Residues 62 to 1229 (TTAAWWGLSR…QARRQHTRKK (1168 aa)) are pore side. The residue at position 81 (S81) is a Phosphoserine. Disordered stretches follow at residues 90-200 (RTLF…LPDR), 296-507 (KKKK…LGYS), 579-747 (KKMQ…TAPT), 936-966 (PLPSYPGANPQPAFGAAEGQPPGAAKPALTP), and 1202-1229 (PSFSIGAGSKTPGARQRLQARRQHTRKK). Positions 155–166 (ARPAPRSTPPSQ) are enriched in pro residues. Residues 176–189 (PSLPTPLLRPSGRP) are compositionally biased toward low complexity. 5 positions are modified to phosphoserine: S322, S328, S348, S370, and S373. Residues 374–400 (LTGAYTSGIPSSSRNAITSSYSSTRGI) show a composition bias toward polar residues. Over residues 409-422 (PSSSPFSSPASSRS) the composition is skewed to low complexity. Basic and acidic residues-rich tracts occupy residues 427–439 (RPAKKIREEELCH) and 449–463 (ADKESQGEKAADTTP). Positions 468 to 479 (NSNSQSTPGSSG) are enriched in polar residues. Positions 612-629 (PPLGLSQSGPPGLLPSPS) are enriched in low complexity. The segment covering 660–673 (QAETATKPQATSAP) has biased composition (polar residues). Composition is skewed to low complexity over residues 689 to 703 (SPSSPAAPAASSASP) and 726 to 747 (SVSATAPSSSSLPTTTSTTAPT). The span at 1219 to 1229 (LQARRQHTRKK) shows a compositional bias: basic residues.

This sequence belongs to the POM121 family.

It localises to the nucleus. It is found in the nuclear pore complex. The protein resides in the nucleus membrane. Its subcellular location is the endoplasmic reticulum membrane. Functionally, essential component of the nuclear pore complex (NPC). The repeat-containing domain may be involved in anchoring components of the pore complex to the pore membrane. When overexpressed in cells induces the formation of cytoplasmic annulate lamellae (AL). The protein is Nuclear envelope pore membrane protein POM 121C (POM121C) of Homo sapiens (Human).